The sequence spans 424 residues: Serine hydroxymethyltransferase (424 aa).

(6S)-5,6,7,8-tetrahydrofolate is bound by residues Leu126 and 130-132; that span reads GHL. Position 235 is an N6-(pyridoxal phosphate)lysine (Lys235). 359–361 is a (6S)-5,6,7,8-tetrahydrofolate binding site; the sequence is SPF.

It belongs to the SHMT family. In terms of assembly, homodimer. Pyridoxal 5'-phosphate is required as a cofactor.

It localises to the cytoplasm. It carries out the reaction (6R)-5,10-methylene-5,6,7,8-tetrahydrofolate + glycine + H2O = (6S)-5,6,7,8-tetrahydrofolate + L-serine. It participates in one-carbon metabolism; tetrahydrofolate interconversion. It functions in the pathway amino-acid biosynthesis; glycine biosynthesis; glycine from L-serine: step 1/1. Functionally, catalyzes the reversible interconversion of serine and glycine with tetrahydrofolate (THF) serving as the one-carbon carrier. This reaction serves as the major source of one-carbon groups required for the biosynthesis of purines, thymidylate, methionine, and other important biomolecules. Also exhibits THF-independent aldolase activity toward beta-hydroxyamino acids, producing glycine and aldehydes, via a retro-aldol mechanism. The protein is Serine hydroxymethyltransferase of Prochlorococcus marinus (strain MIT 9303).